The sequence spans 105 residues: Large ribosomal subunit protein eL36 (105 aa).

The disordered stretch occupies residues 9-31 (VGLNKGHKVTKNVSKPRHSRRRR). Residues 13 to 31 (KGHKVTKNVSKPRHSRRRR) are compositionally biased toward basic residues. N6-acetyllysine is present on Lys-62.

This sequence belongs to the eukaryotic ribosomal protein eL36 family. Component of the large ribosomal subunit.

Its subcellular location is the cytoplasm. It is found in the cytosol. In terms of biological role, component of the large ribosomal subunit. The ribosome is a large ribonucleoprotein complex responsible for the synthesis of proteins in the cell. In Oryctolagus cuniculus (Rabbit), this protein is Large ribosomal subunit protein eL36 (RPL36).